The following is a 55-amino-acid chain: Spermatid nuclear transition protein 1 (55 aa).

A compositionally biased stretch (basic residues) spans 1 to 42 (MSTSRKLKTHGMRRGKNRAPHKGVKRGGSKRKYRKSVLKSRK). A disordered region spans residues 1-55 (MSTSRKLKTHGMRRGKNRAPHKGVKRGGSKRKYRKSVLKSRKRGDDASRNYRSHL). A phosphoserine mark is found at Ser36 and Ser40.

It belongs to the nuclear transition protein 1 family. In terms of tissue distribution, testis-specific.

The protein localises to the nucleus. It localises to the chromosome. Functionally, plays a key role in the replacement of histones to protamine in the elongating spermatids of mammals. In condensing spermatids, loaded onto the nucleosomes, where it promotes the recruitment and processing of protamines, which are responsible for histone eviction. The histone H2AB1-H2BC1/TH2B dimer is required for loading of TNP1 onto chromatin. In Mus musculus (Mouse), this protein is Spermatid nuclear transition protein 1.